The primary structure comprises 75 residues: MSAYFRRKKMCRFSAEGGNEIDYKDINLLKNYITETGKIVPSRITGTQTRFQRQLAKAIKHARFIGLLPYCDSHR.

The protein belongs to the bacterial ribosomal protein bS18 family. In terms of assembly, part of the 30S ribosomal subunit. Forms a tight heterodimer with protein bS6.

Binds as a heterodimer with protein bS6 to the central domain of the 16S rRNA, where it helps stabilize the platform of the 30S subunit. The sequence is that of Small ribosomal subunit protein bS18 from Legionella pneumophila (strain Paris).